The chain runs to 122 residues: MNVQEIHNIREACITILSGTKHNSVLFEPCDKFDEVINSLDIDPDSKETLRRSVSLLVGTRNHKRGCNIDKKTKDMLNKVYEQKQYLTKEEREFVAKKCNLTPLQVRVWFANKRIRNKNTKM.

Positions 62 to 121 (NHKRGCNIDKKTKDMLNKVYEQKQYLTKEEREFVAKKCNLTPLQVRVWFANKRIRNKNTK) form a DNA-binding region, homeobox.

It belongs to the MATA1 family. In terms of assembly, forms a heterodimer with ALPHA2.

The protein resides in the nucleus. In terms of biological role, mating type proteins are sequence specific DNA-binding proteins that act as master switches in yeast differentiation by controlling gene expression in a cell type-specific fashion. Transcriptional corepressor that acts in conjunction with ALPHA2 to repress transcription of haploid-specific genes and of MATALPHA1. This chain is Mating-type protein A1 (MATA1), found in Nakaseomyces delphensis (Yeast).